A 508-amino-acid chain; its full sequence is Lysine--tRNA ligase (508 aa).

Glu418 and Glu425 together coordinate Mg(2+).

It belongs to the class-II aminoacyl-tRNA synthetase family. Homodimer. The cofactor is Mg(2+).

Its subcellular location is the cytoplasm. The catalysed reaction is tRNA(Lys) + L-lysine + ATP = L-lysyl-tRNA(Lys) + AMP + diphosphate. The polypeptide is Lysine--tRNA ligase (Burkholderia pseudomallei (strain 1710b)).